The primary structure comprises 400 residues: Signal recognition particle receptor FtsY (400 aa).

Disordered regions lie at residues 12–37 and 51–86; these read TKKT…QEEQ and NKIK…KDKK. Residues 51–72 are compositionally biased toward basic and acidic residues; it reads NKIKKTKTSETKKQEKPIETLK. Residues 192–199, 278–282, and 342–345 contribute to the GTP site; these read GVNGTGKT, DTAGR, and TKMD.

Belongs to the GTP-binding SRP family. FtsY subfamily. In terms of assembly, part of the signal recognition particle protein translocation system, which is composed of SRP and FtsY.

Its subcellular location is the cell membrane. It is found in the cytoplasm. It carries out the reaction GTP + H2O = GDP + phosphate + H(+). Functionally, involved in targeting and insertion of nascent membrane proteins into the cytoplasmic membrane. Acts as a receptor for the complex formed by the signal recognition particle (SRP) and the ribosome-nascent chain (RNC). The sequence is that of Signal recognition particle receptor FtsY from Mycoplasma mycoides subsp. mycoides SC (strain CCUG 32753 / NCTC 10114 / PG1).